Here is a 407-residue protein sequence, read N- to C-terminus: Melanoma-associated antigen B6 (407 aa).

The disordered stretch occupies residues 1 to 175 (MPRGHKSKLR…YDVAAEGEDE (175 aa)). Polar residues-rich tracts occupy residues 18–29 (TNGQPQGLTGPQ), 57–71 (DASIPQESQGVSPTG), 94–113 (PSTSRDASVPQESQGASPTG), and 136–155 (PSTSHDVSVPQESQGASPTG). The MAGE domain maps to 195 to 394 (VKKKACTLAQ…GLYPHLYEDA (200 aa)).

As to expression, expressed in testis. Not expressed in other normal tissues, but is expressed in tumors of different histological origins.

This chain is Melanoma-associated antigen B6 (MAGEB6), found in Homo sapiens (Human).